The sequence spans 362 residues: Leucoanthocyanidin dioxygenase (362 aa).

A disordered region spans residues 1–23; it reads MVTSAMGPSPRVEELARSGLDTI. Residues 214-313 enclose the Fe2OG dioxygenase domain; the sequence is LIVQMKINFY…RISWAVFCEP (100 aa). Positions 238, 240, and 294 each coordinate Fe cation. Arginine 304 is an active-site residue.

This sequence belongs to the iron/ascorbate-dependent oxidoreductase family. Fe cation is required as a cofactor. L-ascorbate serves as cofactor. In terms of tissue distribution, expressed in red but not in green forma of P.frutescens. In red forma, it is predominantly expressed in stems and leaves, but not in roots.

The enzyme catalyses a (2R,3S,4S)-leucoanthocyanidin + 2-oxoglutarate + O2 = a 4-H-anthocyanidin with a 3-hydroxy group + succinate + CO2 + 2 H2O. It functions in the pathway pigment biosynthesis; anthocyanin biosynthesis. Functionally, oxidation of leucoanthocyanidins into anthocyanidins. This Perilla frutescens (Beefsteak mint) protein is Leucoanthocyanidin dioxygenase (ANS).